We begin with the raw amino-acid sequence, 576 residues long: Aspartate--tRNA ligase, cytoplasmic 1 (576 aa).

Residues 1-78 (MSETTPVPVG…NWGELPMNQS (78 aa)) form a disordered region. Residues 20–43 (LKKEQKKLEKEKKIAEAKAKKAAE) show a composition bias toward basic and acidic residues. An L-aspartate-binding site is contributed by glutamate 302. The interval 324–327 (QLYK) is aspartate. L-aspartate is bound at residue arginine 346. ATP-binding positions include 346-348 (RAE), 354-356 (RHL), and glutamate 499. 2 residues coordinate L-aspartate: serine 502 and arginine 506. Residue 547–550 (GLER) participates in ATP binding.

It belongs to the class-II aminoacyl-tRNA synthetase family. Type 2 subfamily.

Its subcellular location is the cytoplasm. It catalyses the reaction tRNA(Asp) + L-aspartate + ATP = L-aspartyl-tRNA(Asp) + AMP + diphosphate. This chain is Aspartate--tRNA ligase, cytoplasmic 1 (aspS1), found in Dictyostelium discoideum (Social amoeba).